We begin with the raw amino-acid sequence, 406 residues long: Cysteine desulfurase (406 aa).

Lys226 is modified (N6-(pyridoxal phosphate)lysine). Cys364 (cysteine persulfide intermediate) is an active-site residue.

The protein belongs to the class-V pyridoxal-phosphate-dependent aminotransferase family. Csd subfamily. Homodimer. Interacts with SufE and the SufBCD complex composed of SufB, SufC and SufD. The interaction with SufE is required to mediate the direct transfer of the sulfur atom from the S-sulfanylcysteine. Pyridoxal 5'-phosphate serves as cofactor.

It is found in the cytoplasm. It carries out the reaction (sulfur carrier)-H + L-cysteine = (sulfur carrier)-SH + L-alanine. The catalysed reaction is L-selenocysteine + AH2 = hydrogenselenide + L-alanine + A + H(+). It participates in cofactor biosynthesis; iron-sulfur cluster biosynthesis. Cysteine desulfurases mobilize the sulfur from L-cysteine to yield L-alanine, an essential step in sulfur metabolism for biosynthesis of a variety of sulfur-containing biomolecules. Component of the suf operon, which is activated and required under specific conditions such as oxidative stress and iron limitation. Acts as a potent selenocysteine lyase in vitro, that mobilizes selenium from L-selenocysteine. Selenocysteine lyase activity is however unsure in vivo. In Salmonella dublin (strain CT_02021853), this protein is Cysteine desulfurase.